We begin with the raw amino-acid sequence, 301 residues long: Protein ARMCX6 (301 aa).

The segment at 1 to 6 (MGRARE) is mitochondrion outer membrane (MOM)-targeting sequence. Over 1–7 (MGRAREM) the chain is Mitochondrial intermembrane. The chain crosses the membrane as a helical; Signal-anchor span at residues 8-25 (GWMAAGLMIGAGACYCMY). Positions 26–36 (KLTMGRSEGNE) are mitochondrion outer membrane (MOM)-targeting sequence. The Cytoplasmic segment spans residues 26–301 (KLTMGRSEGN…REMLVEAISP (276 aa)). The segment at 69–101 (WSEDGDWDEPGAPGGTEDRRSGGGKANRAHPIK) is disordered.

This sequence belongs to the eutherian X-chromosome-specific Armcx family. As to expression, highly expressed in the developing neural tissues, neural crest derivatives and hind limbs. Also widely expressed in the adult nervous tissue, especially in the forebrain, including the cerebral cortex, hippocampus and thalamus.

The protein localises to the mitochondrion. It localises to the mitochondrion outer membrane. Its function is as follows. May regulate the dynamics and distribution of mitochondria in neural cells. This chain is Protein ARMCX6 (Armcx6), found in Mus musculus (Mouse).